The chain runs to 92 residues: MKTLVLLSALVLLAFQVQADPIQNTDEETKTEEQPGEEDQAVSISFGGQEGSALHEKSLRGLLCYCRKGHCKRGERVRGTCGIRFLYCCPRR.

An N-terminal signal peptide occupies residues 1–19 (MKTLVLLSALVLLAFQVQA). A propeptide spanning residues 20-58 (DPIQNTDEETKTEEQPGEEDQAVSISFGGQEGSALHEKS) is cleaved from the precursor. The tract at residues 23-42 (QNTDEETKTEEQPGEEDQAV) is disordered. 3 disulfides stabilise this stretch: cysteine 64-cysteine 89, cysteine 66-cysteine 81, and cysteine 71-cysteine 88.

This sequence belongs to the alpha-defensin family. As to expression, paneth cells of the small bowel.

The protein resides in the secreted. It is found in the cytoplasmic vesicle. Its subcellular location is the secretory vesicle. Its function is as follows. Host-defense peptide that has antimicrobial activity. Exhibits activity against Gram-negative E.coli (in vitro). Probably contributes to the antimicrobial barrier function of the small bowel mucosa. The polypeptide is Defensin alpha 4 (Mus musculus (Mouse)).